Reading from the N-terminus, the 681-residue chain is Transferrin (681 aa).

The first 18 residues, 1–18 (MALKLLTLIALTCAAANA), serve as a signal peptide directing secretion. 2 Transferrin-like domains span residues 23-364 (YKLC…ERGH) and 371-676 (VRLC…DVIS). Cystine bridges form between cysteine 26-cysteine 60 and cysteine 35-cysteine 51. Fe(3+)-binding residues include aspartate 75 and tyrosine 108. 4 disulfides stabilise this stretch: cysteine 132–cysteine 228, cysteine 181–cysteine 207, cysteine 204–cysteine 213, and cysteine 271–cysteine 284. The hydrogencarbonate site is built by threonine 134, arginine 138, valine 140, and glycine 141. Residue asparagine 218 is glycosylated (N-linked (GlcNAc...) asparagine). Tyrosine 222 lines the Fe(3+) pocket. A glycan (N-linked (GlcNAc...) asparagine) is linked at asparagine 355. 2 disulfides stabilise this stretch: cysteine 374–cysteine 411 and cysteine 384–cysteine 402. N-linked (GlcNAc...) asparagine glycosylation occurs at asparagine 418. 3 disulfides stabilise this stretch: cysteine 478-cysteine 551, cysteine 506-cysteine 678, and cysteine 579-cysteine 596.

This sequence belongs to the transferrin family.

The protein resides in the secreted. Its function is as follows. Transferrins are iron binding transport proteins which bind Fe(3+) ion in association with the binding of an anion, usually bicarbonate. This transferrin binds only one Fe(3+) ion per protein molecule. This chain is Transferrin, found in Manduca sexta (Tobacco hawkmoth).